The chain runs to 289 residues: Metal-staphylopine import system permease protein CntC (289 aa).

A run of 5 helical transmembrane segments spans residues Ala-13–Val-33, Leu-77–Leu-97, Val-115–Gly-135, Ile-194–Phe-214, and Ile-249–Ile-269. The ABC transmembrane type-1 domain maps to Ile-73 to Ser-262.

It belongs to the binding-protein-dependent transport system permease family. The complex is composed of two ATP-binding proteins (CntD and CntF), two transmembrane proteins (CntB and CntC) and a solute-binding protein (CntA).

Its subcellular location is the cell membrane. Functionally, part of the ABC transporter complex CntABCDF (Opp1) involved in the uptake of metal in complex with the metallophore staphylopine (StP). May be involved in the import of a large array of divalent metals ions such as nickel, cobalt, zinc, copper and iron. Probably responsible for the translocation of the substrate across the membrane. The protein is Metal-staphylopine import system permease protein CntC of Staphylococcus aureus (strain Mu50 / ATCC 700699).